The chain runs to 195 residues: Imidazoleglycerol-phosphate dehydratase (195 aa).

The protein belongs to the imidazoleglycerol-phosphate dehydratase family.

Its subcellular location is the cytoplasm. It carries out the reaction D-erythro-1-(imidazol-4-yl)glycerol 3-phosphate = 3-(imidazol-4-yl)-2-oxopropyl phosphate + H2O. Its pathway is amino-acid biosynthesis; L-histidine biosynthesis; L-histidine from 5-phospho-alpha-D-ribose 1-diphosphate: step 6/9. The sequence is that of Imidazoleglycerol-phosphate dehydratase from Burkholderia cenocepacia (strain HI2424).